Reading from the N-terminus, the 378-residue chain is Leukosialin (378 aa).

An N-terminal signal peptide occupies residues 1 to 7 (WAQVVSQ). Residues 8-231 (ENLPNTMTML…TVPPRPGSSG (224 aa)) are Extracellular-facing. O-linked (GalNAc...) threonine glycans are attached at residues threonine 13, threonine 15, and threonine 20. Residues 13–33 (TMTMLPFTPNSESPSTSEALS) are disordered. Residues serine 23, serine 25, and serine 27 are each glycosylated (O-linked (GalNAc...) serine). Threonine 28 carries an O-linked (GalNAc...) threonine glycan. O-linked (GalNAc...) serine glycans are attached at residues serine 29 and serine 33. O-linked (GalNAc...) threonine glycosylation is present at threonine 34. O-linked (GalNAc...) serine glycosylation is found at serine 36 and serine 37. The O-linked (GalNAc...) threonine glycan is linked to threonine 40. 2 O-linked (GalNAc...) serine glycosylation sites follow: serine 108 and serine 113. O-linked (GalNAc...) threonine glycosylation is found at threonine 118, threonine 120, and threonine 124. O-linked (GalNAc...) serine glycosylation is found at serine 125 and serine 126. Threonine 174 carries O-linked (GalNAc...) threonine glycosylation. O-linked (GalNAc...) serine glycans are attached at residues serine 176 and serine 180. O-linked (GalNAc...) threonine glycosylation occurs at threonine 183. Residue serine 187 is glycosylated (O-linked (GalNAc...) serine). Residue threonine 189 is glycosylated (O-linked (GalNAc...) threonine). Residues 232–254 (MLLVSMLIALTVVLVLVALLLLW) traverse the membrane as a helical segment. The interval 255–285 (RQRQKRRTGALTLSRGGKRNGTVDAWAGPAR) is required for interaction with EZR, MSN and RDX and for co-localization to microvilli. Residues 255–378 (RQRQKRRTGA…AKDGAAPQSL (124 aa)) are Cytoplasmic-facing. Positions 259–273 (KRRTGALTLSRGGKR) match the Nuclear localization signal motif. The segment at 265–378 (LTLSRGGKRN…AKDGAAPQSL (114 aa)) is disordered. The residue at position 268 (serine 268) is a Phosphoserine. Threonine 276 carries the phosphothreonine modification. Over residues 310–321 (GSGQRPTLTTFF) the composition is skewed to polar residues. At serine 311 the chain carries Phosphoserine. At threonine 316 the chain carries Phosphothreonine. Phosphoserine is present on residues serine 322 and serine 326. Serine 330 is subject to Phosphoserine; by PKC/PRKCQ. At serine 354 the chain carries Phosphoserine. Residue threonine 361 is modified to Phosphothreonine.

Interacts with SIGLEC1. In terms of assembly, monomer. Interacts with CTNNB1. Interacts with EZR, MSN and RDX (via FERM domain). Post-translationally, has a high content of sialic acid and O-linked carbohydrate structures. In terms of processing, phosphorylation at Ser-330 is regulated by chemokines, requires its association with ERM proteins (EZR, RDX and MSN) and is essential for its function in the regulation of T-cell trafficking to lymph nodes. Cleavage by CTSG releases its extracellular domain and triggers its intramembrane proteolysis by gamma-secretase releasing the CD43 cytoplasmic tail chain (CD43-ct) which translocates to the nucleus. Post-translationally, sumoylated. As to expression, cell surface of thymocytes, T-lymphocytes, neutrophils, plasma cells and myelomas.

The protein localises to the membrane. It localises to the cell projection. Its subcellular location is the microvillus. It is found in the uropodium. The protein resides in the nucleus. The protein localises to the PML body. Its function is as follows. Predominant cell surface sialoprotein of leukocytes which regulates multiple T-cell functions, including T-cell activation, proliferation, differentiation, trafficking and migration. Positively regulates T-cell trafficking to lymph-nodes via its association with ERM proteins (EZR, RDX and MSN). Negatively regulates Th2 cell differentiation and predisposes the differentiation of T-cells towards a Th1 lineage commitment. Promotes the expression of IFN-gamma by T-cells during T-cell receptor (TCR) activation of naive cells and induces the expression of IFN-gamma by CD4(+) T-cells and to a lesser extent by CD8(+) T-cells. Plays a role in preparing T-cells for cytokine sensing and differentiation into effector cells by inducing the expression of cytokine receptors IFNGR and IL4R, promoting IFNGR and IL4R signaling and by mediating the clustering of IFNGR with TCR. Acts as a major E-selectin ligand responsible for Th17 cell rolling on activated vasculature and recruitment during inflammation. Mediates Th17 cells, but not Th1 cells, adhesion to E-selectin. Acts as a T-cell counter-receptor for SIGLEC1. Protects cells from apoptotic signals, promoting cell survival. The polypeptide is Leukosialin (Spn) (Rattus norvegicus (Rat)).